A 93-amino-acid chain; its full sequence is Stromal cell-derived factor 1 (93 aa).

Residues 1-21 (MDAKVVAVLALVLAALCISDG) form the signal peptide. Positions 22 to 23 (KP) match the Receptor activation motif motif. Positions 29 to 33 (RCPCR) are receptor and heparin binding. Disulfide bonds link cysteine 30-cysteine 55 and cysteine 32-cysteine 71. 3 receptor binding regions span residues 39-41 (IAR), 48-50 (KIL), and 60-70 (VARLKNNNRQV). Residues 41-51 (RANVKHLKILN), arginine 62, glutamine 69, and lysine 85 each bind heparin.

Belongs to the intercrine alpha (chemokine CxC) family. In terms of assembly, monomer or homodimer; in equilibrium. Dimer formation is induced by non acidic pH and the presence of multivalent anions, and by binding to CXCR4 or heparin. Monomeric form is required for full chemotactic activity and resistance to ischemia/reperfusion injury, whereas the dimeric form acts as a partial agonist of CXCR4, stimulating Ca2+ mobilization but with no chemotactic activity and instead acts as a selective antagonist that blocks chemotaxis induced by the monomeric form. Interacts with the N-terminus of ACKR3. Interacts with integrin subunit ITGB3 (via the allosteric site (site 2)). Interacts with TNFAIP6 (via Link domain). As to expression, highest expression levels detected in kidney, liver, spleen and muscle. Isoform Alpha is expressed ubiquitously but at varying levels, while isoform Beta displays tissue-specific expression, with expression detected in kidney, liver, heart, spleen and muscle but not in lung, colon, brain, skin and stomach.

It is found in the secreted. Functionally, chemoattractant active on T-lymphocytes and monocytes but not neutrophils. Activates the C-X-C chemokine receptor CXCR4 to induce a rapid and transient rise in the level of intracellular calcium ions and chemotaxis. Also binds to atypical chemokine receptor ACKR3, which activates the beta-arrestin pathway and acts as a scavenger receptor for SDF-1. Binds to the allosteric site (site 2) of integrins and activates integrins ITGAV:ITGB3, ITGA4:ITGB1 and ITGA5:ITGB1 in a CXCR4-independent manner. Acts as a positive regulator of monocyte migration and a negative regulator of monocyte adhesion via the LYN kinase. Stimulates migration of monocytes and T-lymphocytes through its receptors, CXCR4 and ACKR3, and decreases monocyte adherence to surfaces coated with ICAM-1, a ligand for beta-2 integrins. SDF1A/CXCR4 signaling axis inhibits beta-2 integrin LFA-1 mediated adhesion of monocytes to ICAM-1 through LYN kinase. Plays a protective role after myocardial infarction. Induces down-regulation and internalization of ACKR3 expressed in various cells. Has several critical functions during embryonic development; required for B-cell lymphopoiesis, myelopoiesis in bone marrow and heart ventricular septum formation. Stimulates the proliferation of bone marrow-derived B-cell progenitors in the presence of IL7 as well as growth of stromal cell-dependent pre-B-cells. The protein is Stromal cell-derived factor 1 (Cxcl12) of Mus musculus (Mouse).